Consider the following 100-residue polypeptide: uncharacterized protein (100 aa).

This is an uncharacterized protein from Schizosaccharomyces pombe (strain 972 / ATCC 24843) (Fission yeast).